We begin with the raw amino-acid sequence, 130 residues long: D-ribose pyranase (130 aa).

Histidine 20 acts as the Proton donor in catalysis. Substrate-binding positions include aspartate 28, histidine 97, and 119 to 121; that span reads YSN.

The protein belongs to the RbsD / FucU family. RbsD subfamily. Homodecamer.

It is found in the cytoplasm. It carries out the reaction beta-D-ribopyranose = beta-D-ribofuranose. Its pathway is carbohydrate metabolism; D-ribose degradation; D-ribose 5-phosphate from beta-D-ribopyranose: step 1/2. Catalyzes the interconversion of beta-pyran and beta-furan forms of D-ribose. This chain is D-ribose pyranase, found in Lacticaseibacillus casei (strain BL23) (Lactobacillus casei).